A 227-amino-acid polypeptide reads, in one-letter code: DNA packaging ATPase P9 (227 aa).

16–23 (GKTGTGKT) provides a ligand contact to ATP.

In terms of assembly, heterodimer of P6 and P9; further multimerizes as hexamers of heterodimers. Part of the dodecameric portal complex that is composed of the packaging efficiency factor P6, the DNA packaging ATPase P9, and the internal heterododecamer P20/P22 which spans the virion inner membrane.

It localises to the virion. In terms of biological role, together with the packaging efficiency factor P6, forms the external part of the portal vertex that is embeded in the capsid and which plays critical roles in genome packaging and genome ejection. Both proteins multimerize as a single ring-shaped heterdodecamer arranged around a central channel. This chain is DNA packaging ATPase P9 (IX), found in Enterobacteria phage PRD1 (Bacteriophage PRD1).